The primary structure comprises 589 residues: Proline--tRNA ligase (589 aa).

It belongs to the class-II aminoacyl-tRNA synthetase family. ProS type 1 subfamily. Homodimer.

The protein localises to the cytoplasm. It carries out the reaction tRNA(Pro) + L-proline + ATP = L-prolyl-tRNA(Pro) + AMP + diphosphate. Its function is as follows. Catalyzes the attachment of proline to tRNA(Pro) in a two-step reaction: proline is first activated by ATP to form Pro-AMP and then transferred to the acceptor end of tRNA(Pro). As ProRS can inadvertently accommodate and process non-cognate amino acids such as alanine and cysteine, to avoid such errors it has two additional distinct editing activities against alanine. One activity is designated as 'pretransfer' editing and involves the tRNA(Pro)-independent hydrolysis of activated Ala-AMP. The other activity is designated 'posttransfer' editing and involves deacylation of mischarged Ala-tRNA(Pro). The misacylated Cys-tRNA(Pro) is not edited by ProRS. This is Proline--tRNA ligase from Nocardioides sp. (strain ATCC BAA-499 / JS614).